Consider the following 878-residue polypeptide: Probable glucan endo-1,3-beta-glucosidase ARB_02077 (878 aa).

A signal peptide spans 1–27 (MARGLVSSLLLGQLLLVLVGLFSPAGA). Residues Asn-228, Asn-257, Asn-290, and Asn-297 are each glycosylated (N-linked (GlcNAc...) asparagine). The segment at 373 to 472 (AGSGSKAKRL…TACPSAPVTK (100 aa)) is disordered. Pro residues predominate over residues 400-416 (APAPQPPAQSTAPPYPI). A compositionally biased stretch (low complexity) spans 433-452 (VPTRVPTGGVPSGTTGTAPS). N-linked (GlcNAc...) asparagine glycosylation is found at Asn-505, Asn-659, Asn-795, and Asn-862.

The protein belongs to the glycosyl hydrolase 55 family.

Its subcellular location is the secreted. The catalysed reaction is Hydrolysis of (1-&gt;3)-beta-D-glucosidic linkages in (1-&gt;3)-beta-D-glucans.. Its function is as follows. Probable glucan endo-1,3-beta-glucosidase involved in the hydrolysis of fungal cell wall. Classified as a small-oligosaccharide-producing type based its the end products: glucose, laminaribiose or laminaritetraose. This is Probable glucan endo-1,3-beta-glucosidase ARB_02077 from Arthroderma benhamiae (strain ATCC MYA-4681 / CBS 112371) (Trichophyton mentagrophytes).